A 123-amino-acid chain; its full sequence is MSVQNICSTKAYDMLISNDNAFLVDVRTREEWQQVGIPHLDNKNKVIFLSWQLNKDFEDNFLSIVNDKIHAIIFFLCRSGYRSFIAANFITNIGYKNCYNISDGFEGNNQDKGWKQNNLPWQF.

The Rhodanese domain occupies 17 to 117 (SNDNAFLVDV…NNQDKGWKQN (101 aa)).

This is an uncharacterized protein from Rickettsia conorii (strain ATCC VR-613 / Malish 7).